The sequence spans 218 residues: Nuclear cap-binding protein subunit 2 (218 aa).

MRNA contacts are provided by residues Tyr24, Tyr49, 118–122 (TIDLD), 129–133 (RQFGR), and 139–140 (QV). The 79-residue stretch at 46 to 124 (ATIYVGNLSF…REITIDLDPG (79 aa)) folds into the RRM domain. Positions 176–194 (DPHKNHHHHHHGHHHHHGQ) are enriched in basic residues. Residues 176–200 (DPHKNHHHHHHGHHHHHGQPHAAAA) are disordered.

Belongs to the RRM NCBP2 family. In terms of assembly, component of the nuclear cap-binding complex (CBC).

The protein localises to the nucleus. In terms of biological role, component of the cap-binding complex (CBC) involved in the nuclear export of capped U snRNAs. The CBC complex is required for efficient pre-mRNA splicing through efficient commitment complex and spliceosome formation; and involved in rRNA processing at sites A0, A1 and A2. In Eremothecium gossypii (strain ATCC 10895 / CBS 109.51 / FGSC 9923 / NRRL Y-1056) (Yeast), this protein is Nuclear cap-binding protein subunit 2 (CBC2).